A 334-amino-acid chain; its full sequence is Tryptophan--tRNA ligase (334 aa).

Residues 11 to 13 (QPS) and 19 to 20 (GN) contribute to the ATP site. Positions 12–20 (PSGELTIGN) match the 'HIGH' region motif. Asp-135 provides a ligand contact to L-tryptophan. Residues 147-149 (GED), Val-186, and 195-199 (KMSKS) contribute to the ATP site. A 'KMSKS' region motif is present at residues 195–199 (KMSKS).

This sequence belongs to the class-I aminoacyl-tRNA synthetase family. In terms of assembly, homodimer.

The protein localises to the cytoplasm. The enzyme catalyses tRNA(Trp) + L-tryptophan + ATP = L-tryptophyl-tRNA(Trp) + AMP + diphosphate + H(+). Its function is as follows. Catalyzes the attachment of tryptophan to tRNA(Trp). This Escherichia coli O157:H7 protein is Tryptophan--tRNA ligase.